The following is a 161-amino-acid chain: Vitamin K epoxide reductase complex subunit 1 (161 aa).

At 1–9 (MGTTWRSPG) the chain is on the cytoplasmic side. A helical membrane pass occupies residues 10–29 (LVRLALCLAGLALSLYALHV). Residues 30-80 (KAARARDENYRALCDVGTAISCSRVFSSRWGRGFGLVEHMLGADSVLNQSN) lie on the Lumenal side of the membrane. C43 and C51 are disulfide-bonded. N80 contacts (S)-warfarin. Residues 81 to 95 (SIFGCLFYTLQLLLG) traverse the membrane as a helical segment. The Cytoplasmic portion of the chain corresponds to 96–100 (CLRGR). A helical transmembrane segment spans residues 101-128 (WASILLVLSSLVSVAGSVYLAWILFFVL). The Lumenal segment spans residues 129–131 (YDF). An intrachain disulfide couples C132 to C135. A helical membrane pass occupies residues 132–153 (CIVCITTYAINVGLMLLSFQKV). Positions 135 and 139 each coordinate phylloquinone. Residue Y139 coordinates (S)-warfarin. The Cytoplasmic segment spans residues 154–161 (PEHKTKKH).

The protein belongs to the VKOR family. Detected in liver.

It localises to the endoplasmic reticulum membrane. It catalyses the reaction phylloquinone + [protein]-disulfide + H2O = 2,3-epoxyphylloquinone + [protein]-dithiol. The catalysed reaction is phylloquinol + [protein]-disulfide = phylloquinone + [protein]-dithiol. With respect to regulation, inhibited by warfarin (coumadin). Warfarin locks VKORC1 in both redox states into the closed conformation. In terms of biological role, involved in vitamin K metabolism. Catalytic subunit of the vitamin K epoxide reductase (VKOR) complex which reduces inactive vitamin K 2,3-epoxide to active vitamin K. Vitamin K is required for the gamma-carboxylation of various proteins, including clotting factors, and is required for normal blood coagulation, but also for normal bone development. This Mus musculus (Mouse) protein is Vitamin K epoxide reductase complex subunit 1 (Vkorc1).